The following is a 1381-amino-acid chain: MKAPTVLTPGILVLLFILVQRSNGECKEALTKSEMNVNMKYQLPNFTAETPIQNVVLHEHHIFLGATNYIYVLNEEDLQKVAEHRTGPVLEHPDCFPCQDCSSKANLSGGVWKDNINMALVVDTYYDDQLISCGSVNRGTCQRHVFPHNHTADIQSEVHCIFSPQTEEPSQCPDCVVSALGTKVLLSVKDRFLNFFVGNTINSSYFPDHSLHSISVRRLKETKDGFMFLTDQSYVDVLPEFRDSYPIKYVHAFESNNFIYFLTVQRETLNAQTFHTRIIRFCSINSALHSYMEMPLECILTEKRKKRSTKKEVFNILQAAYVSKPGAQLARQIGASLNDDILFGVFAQSKPDSAEPMDRSAVCAFPIKYVNDFFNKIVNKNNVRCLQHFYGPNHEHCFNRTFQRNLLGCEARRDEYRTEFTTALQRIDLFAGQFNKVLLTSISTFVKGDLTIANLGTSEGRFIQIVVSRSVPSTPHVNFLLDSHPVSPEVIVEHPLNQNGYTLVVTGKKITKIPLNGLGCRHFQSCSQCLSAPSFVQCGWCHDKCVRSEECSSGTWTQETCLPTIYRVFPTSAPLEGGTRLTICGWDFGFRRNNKFDLKKTRVLLGNESCTLTLSESTMNTLKCTVGPAMNEHFNMSIIISNTHGTTQYSTFSYVDPIITSISPRYGPMSGGTLLTLTGNYLNSGNSRHISIGGKTCTLKSVSNSILECYTPAQTISTEFPVKLKIDLANRETSIFSYREDPIVYEIHPTKSFISGGSTITGIGKNLNSVSVPRMVINLHEARRNFTVACQHRSNSEIICCTTPSLQQLNLQLPLKTKAFFMLDGILSKYFDLIYVHNPVFKPFEKPVMISMGNENVLEIKGNDIDPEAVKGEVLKVGNKSCENIHLHSEAVLCTVPSDLLKLNSELNIEWKQAISSTVLGKVIVQPDQNFTGLIAGVVSISIALLLLLGLFLWLKKRKQIKDLGSELVRYDARVHTPHLDRLVSARSVSPTTEMVSNESVDYRATFPEDQFPNSSQNGSCRQVQYPLTDMSPILTSGDSDISSPLLQNTVHIDLSALNPELVQAVQHVVIGPSSLIVHFNEVIGRGHFGCVYHGTLLDNDGKKIHCAVKSLNRITDIGEVSQFLTEGIIMKDFSHPNVLSLLGICLRSEGSPLVVLPYMKHGDLRNFIRNETHNPTVKDLIGFGLQVAKGMKYLASKKFVHRDLAARNCMLDEKFTVKVADFGLARDMYDKEYYSVHNKTGAKLPVKWMALESLQTQKFTTKSDVWSFGVLLWELMTRGAPPYPDVNTFDITVYLLQGRRLLQPEYCPDPLYEVMLKCWHPKAEMRPSFSELVSRISAIFSAFIGEHYVHVNATYVNVKCVAPYPSLLSSQDNADGEVDT.

The first 24 residues, 1-24 (MKAPTVLTPGILVLLFILVQRSNG), serve as a signal peptide directing secretion. Residues 25 to 932 (ECKEALTKSE…VIVQPDQNFT (908 aa)) are Extracellular-facing. The Sema domain maps to 27–515 (KEALTKSEMN…TGKKITKIPL (489 aa)). A glycan (N-linked (GlcNAc...) asparagine) is linked at Asn-45. Cystine bridges form between Cys-95-Cys-101, Cys-98-Cys-160, Cys-133-Cys-141, and Cys-172-Cys-175. Asn-106 carries an N-linked (GlcNAc...) asparagine glycan. N-linked (GlcNAc...) asparagine glycosylation is present at Asn-149. An N-linked (GlcNAc...) asparagine glycan is attached at Asn-202. Intrachain disulfides connect Cys-298–Cys-363 and Cys-385–Cys-397. N-linked (GlcNAc...) asparagine glycosylation occurs at Asn-399. 4 cysteine pairs are disulfide-bonded: Cys-520–Cys-538, Cys-526–Cys-561, Cys-529–Cys-545, and Cys-541–Cys-551. IPT/TIG domains are found at residues 563–655 (PTIY…FSYV), 657–739 (PIIT…FSYR), and 742–836 (PIVY…LIYV). Thr-582 carries O-linked (Man) threonine glycosylation. Asn-607 and Asn-635 each carry an N-linked (GlcNAc...) asparagine glycan. O-linked (Man) threonine glycans are attached at residues Thr-676 and Thr-761. N-linked (GlcNAc...) asparagine glycosylation is found at Asn-785, Asn-879, and Asn-930. A helical membrane pass occupies residues 933-955 (GLIAGVVSISIALLLLLGLFLWL). Topologically, residues 956 to 1381 (KKRKQIKDLG…QDNADGEVDT (426 aa)) are cytoplasmic. Ser-966 is modified (phosphoserine). Thr-977 bears the Phosphothreonine mark. Phosphoserine occurs at positions 990, 997, and 1000. The residue at position 1003 (Tyr-1003) is a Phosphotyrosine. The Protein kinase domain maps to 1078–1345 (VHFNEVIGRG…RISAIFSAFI (268 aa)). ATP contacts are provided by residues 1084–1092 (IGRGHFGCV) and Lys-1110. Asp-1204 serves as the catalytic Proton acceptor. The tract at residues 1212–1381 (LDEKFTVKVA…QDNADGEVDT (170 aa)) is interaction with RANBP9. The residue at position 1230 (Tyr-1230) is a Phosphotyrosine. Phosphotyrosine; by autocatalysis occurs at positions 1234 and 1235. A Phosphothreonine modification is found at Thr-1289. The segment at 1320-1359 (WHPKAEMRPSFSELVSRISAIFSAFIGEHYVHVNATYVNV) is interaction with MUC20. Phosphotyrosine; by autocatalysis occurs at positions 1349 and 1356. Position 1365 is a phosphotyrosine (Tyr-1365).

Belongs to the protein kinase superfamily. Tyr protein kinase family. As to quaternary structure, heterodimer made of an alpha chain (50 kDa) and a beta chain (145 kDa) which are disulfide linked. Binds PLXNB1. Interacts when phosphorylated with downstream effectors including STAT3, PIK3R1, SRC, PCLG1, GRB2 and GAB1. Interacts with SPSB1, SPSB2 and SPSB4. Interacts with INPP5D/SHIP1. When phosphorylated at Tyr-1356, interacts with INPPL1/SHIP2. Interacts with RANBP9 and RANBP10, as well as SPSB1, SPSB2, SPSB3 and SPSB4. SPSB1 binding occurs in the presence and in the absence of HGF, however HGF treatment has a positive effect on this interaction. Interacts with MUC20; prevents interaction with GRB2 and suppresses hepatocyte growth factor-induced cell proliferation. Interacts with GRB10. Interacts with PTPN1 and PTPN2. Interacts with tensin TNS3. Interacts (when phosphorylated) with tensin TNS4 (via SH2 domain); the interaction increases MET protein stability by inhibiting MET endocytosis and subsequent lysosomal degradation. Autophosphorylated in response to ligand binding on Tyr-1234 and Tyr-1235 in the kinase domain leading to further phosphorylation of Tyr-1349 and Tyr-1356 in the C-terminal multifunctional docking site. Dephosphorylated by PTPRJ at Tyr-1349 and Tyr-1365. Dephosphorylated by PTPN1 and PTPN2. Post-translationally, ubiquitinated. Ubiquitination by CBL regulates the receptor stability and activity through proteasomal degradation. In terms of processing, O-mannosylation of IPT/TIG domains by TMEM260 is required for protein maturation. O-mannosylated residues are composed of single mannose glycans that are not elongated or modified.

Its subcellular location is the membrane. The catalysed reaction is L-tyrosyl-[protein] + ATP = O-phospho-L-tyrosyl-[protein] + ADP + H(+). With respect to regulation, in its inactive state, the C-terminal tail interacts with the catalytic domain and inhibits the kinase activity. Upon ligand binding, the C-terminal tail is displaced and becomes phosphorylated, thus increasing the kinase activity. In terms of biological role, receptor tyrosine kinase that transduces signals from the extracellular matrix into the cytoplasm by binding to hepatocyte growth factor/HGF ligand. Regulates many physiological processes including proliferation, scattering, morphogenesis and survival. Ligand binding at the cell surface induces autophosphorylation of MET on its intracellular domain that provides docking sites for downstream signaling molecules. Following activation by ligand, interacts with the PI3-kinase subunit PIK3R1, PLCG1, SRC, GRB2, STAT3 or the adapter GAB1. Recruitment of these downstream effectors by MET leads to the activation of several signaling cascades including the RAS-ERK, PI3 kinase-AKT, or PLCgamma-PKC. The RAS-ERK activation is associated with the morphogenetic effects while PI3K/AKT coordinates prosurvival effects. During embryonic development, MET signaling plays a role in gastrulation, development and migration of muscles and neuronal precursors, angiogenesis and kidney formation. In adults, participates in wound healing as well as organ regeneration and tissue remodeling. Also promotes differentiation and proliferation of hematopoietic cells. This is Hepatocyte growth factor receptor (MET) from Ateles geoffroyi (Black-handed spider monkey).